The primary structure comprises 271 residues: Tryptophan synthase alpha chain (271 aa).

Active-site proton acceptor residues include Glu-49 and Asp-60.

Belongs to the TrpA family. In terms of assembly, tetramer of two alpha and two beta chains.

The enzyme catalyses (1S,2R)-1-C-(indol-3-yl)glycerol 3-phosphate + L-serine = D-glyceraldehyde 3-phosphate + L-tryptophan + H2O. Its pathway is amino-acid biosynthesis; L-tryptophan biosynthesis; L-tryptophan from chorismate: step 5/5. The alpha subunit is responsible for the aldol cleavage of indoleglycerol phosphate to indole and glyceraldehyde 3-phosphate. The chain is Tryptophan synthase alpha chain from Burkholderia thailandensis (strain ATCC 700388 / DSM 13276 / CCUG 48851 / CIP 106301 / E264).